The primary structure comprises 501 residues: Putative BTB/POZ domain-containing protein L107 (501 aa).

One can recognise a BTB domain in the interval 16–87; that stretch reads TDLELTLVDS…FYITDIERSQ (72 aa).

Belongs to the mimivirus BTB/WD family.

This chain is Putative BTB/POZ domain-containing protein L107, found in Acanthamoeba polyphaga mimivirus (APMV).